A 259-amino-acid chain; its full sequence is Ubiquitin-conjugating enzyme E2 J2 (259 aa).

At 1-226 (MSSTSSKRAP…AGLQQANRHH (226 aa)) the chain is on the cytoplasmic side. The 151-residue stretch at 12–162 (TATQRLKQDY…DKVFCELFPE (151 aa)) folds into the UBC core domain. Residue Cys94 is the Glycyl thioester intermediate of the active site. Residues 227-247 (GLLGGALANLFVIVGFAAFAY) form a helical; Anchor for type IV membrane protein membrane-spanning segment. Residues 248–259 (TVKYVLRSIAQE) are Lumenal-facing.

The protein belongs to the ubiquitin-conjugating enzyme family. Auto-ubiquitinated.

It localises to the endoplasmic reticulum membrane. The enzyme catalyses S-ubiquitinyl-[E1 ubiquitin-activating enzyme]-L-cysteine + [E2 ubiquitin-conjugating enzyme]-L-cysteine = [E1 ubiquitin-activating enzyme]-L-cysteine + S-ubiquitinyl-[E2 ubiquitin-conjugating enzyme]-L-cysteine.. Its pathway is protein modification; protein ubiquitination. Its function is as follows. Catalyzes the covalent attachment of ubiquitin to other proteins. Seems to function in the selective degradation of misfolded membrane proteins from the endoplasmic reticulum (ERAD). In cooperation with the GATOR2 complex, catalyzes 'Lys-6'-linked ubiquitination of NPRL2. The sequence is that of Ubiquitin-conjugating enzyme E2 J2 (UBE2J2) from Homo sapiens (Human).